The chain runs to 974 residues: UvrABC system protein A (974 aa).

34–41 is an ATP binding site; the sequence is GLSGSGKS. ABC transporter domains are found at residues 331-610 and 630-959; these read WARS…TNSL and ISKT…QFLK. An ATP-binding site is contributed by 663-670; the sequence is GVSGGGKS. The segment at 762-788 adopts a C4-type zinc-finger fold; it reads CEACQGDGVIKIEMHFLPDVYVTCDVC.

This sequence belongs to the ABC transporter superfamily. UvrA family. In terms of assembly, forms a heterotetramer with UvrB during the search for lesions.

It is found in the cytoplasm. Functionally, the UvrABC repair system catalyzes the recognition and processing of DNA lesions. UvrA is an ATPase and a DNA-binding protein. A damage recognition complex composed of 2 UvrA and 2 UvrB subunits scans DNA for abnormalities. When the presence of a lesion has been verified by UvrB, the UvrA molecules dissociate. This is UvrABC system protein A from Brucella abortus (strain 2308).